The primary structure comprises 379 residues: Dual-specificity RNA methyltransferase RlmN (379 aa).

Catalysis depends on Glu-95, which acts as the Proton acceptor. The 245-residue stretch at 101 to 345 (EETRGTLCVS…TTVRKTRGDD (245 aa)) folds into the Radical SAM core domain. The cysteines at positions 108 and 350 are disulfide-linked. [4Fe-4S] cluster contacts are provided by Cys-115, Cys-119, and Cys-122. Residues 176–177 (GE), Ser-208, 230–232 (SLH), and Asn-307 contribute to the S-adenosyl-L-methionine site. The S-methylcysteine intermediate role is filled by Cys-350.

The protein belongs to the radical SAM superfamily. RlmN family. Requires [4Fe-4S] cluster as cofactor.

Its subcellular location is the cytoplasm. The catalysed reaction is adenosine(2503) in 23S rRNA + 2 reduced [2Fe-2S]-[ferredoxin] + 2 S-adenosyl-L-methionine = 2-methyladenosine(2503) in 23S rRNA + 5'-deoxyadenosine + L-methionine + 2 oxidized [2Fe-2S]-[ferredoxin] + S-adenosyl-L-homocysteine. The enzyme catalyses adenosine(37) in tRNA + 2 reduced [2Fe-2S]-[ferredoxin] + 2 S-adenosyl-L-methionine = 2-methyladenosine(37) in tRNA + 5'-deoxyadenosine + L-methionine + 2 oxidized [2Fe-2S]-[ferredoxin] + S-adenosyl-L-homocysteine. Its function is as follows. Specifically methylates position 2 of adenine 2503 in 23S rRNA and position 2 of adenine 37 in tRNAs. m2A2503 modification seems to play a crucial role in the proofreading step occurring at the peptidyl transferase center and thus would serve to optimize ribosomal fidelity. The protein is Dual-specificity RNA methyltransferase RlmN of Burkholderia cenocepacia (strain HI2424).